A 106-amino-acid chain; its full sequence is Large ribosomal subunit protein uL24 (106 aa).

The protein belongs to the universal ribosomal protein uL24 family. In terms of assembly, part of the 50S ribosomal subunit.

One of two assembly initiator proteins, it binds directly to the 5'-end of the 23S rRNA, where it nucleates assembly of the 50S subunit. In terms of biological role, one of the proteins that surrounds the polypeptide exit tunnel on the outside of the subunit. This chain is Large ribosomal subunit protein uL24, found in Erythrobacter litoralis (strain HTCC2594).